A 533-amino-acid chain; its full sequence is Suppressor of cytokine signaling 6 (533 aa).

2 disordered regions span residues 54–136 and 177–199; these read CDIG…WPLR and ELRDLQPEPRPESRCSPSSPGDL. The span at 59-69 shows a compositional bias: basic and acidic residues; sequence EDEKGKNRSKS. A compositionally biased stretch (basic residues) spans 76–88; it reads LKRRLSAKQKTKG. Over residues 177–189 the composition is skewed to basic and acidic residues; that stretch reads ELRDLQPEPRPES. Residues 382-489 form the SH2 domain; it reads WYWGPITRWE…TYPVRLTNPV (108 aa). Residues 484-533 enclose the SOCS box domain; it reads RLTNPVSRFMQVRSLQYLCRFVIRQYTRIDLIQKLPLPNKMKDYLQEKHY.

In terms of assembly, interacts with KIT (phosphorylated). Interacts with RBCK1. Interacts with phosphorylated IRS4. Interacts with PIM3.

It participates in protein modification; protein ubiquitination. Its function is as follows. SOCS family proteins form part of a classical negative feedback system that regulates cytokine signal transduction. May be a substrate recognition component of a SCF-like ECS (Elongin BC-CUL2/5-SOCS-box protein) E3 ubiquitin-protein ligase complex which mediates the ubiquitination and subsequent proteasomal degradation of target proteins. Regulates KIT degradation by ubiquitination of the tyrosine-phosphorylated receptor. The protein is Suppressor of cytokine signaling 6 (Socs6) of Mus musculus (Mouse).